Consider the following 374-residue polypeptide: Alanine racemase (374 aa).

Lys35 serves as the catalytic Proton acceptor; specific for D-alanine. Position 35 is an N6-(pyridoxal phosphate)lysine (Lys35). Position 130 (Arg130) interacts with substrate. The active-site Proton acceptor; specific for L-alanine is Tyr261. Met309 contacts substrate.

This sequence belongs to the alanine racemase family. Pyridoxal 5'-phosphate serves as cofactor.

It catalyses the reaction L-alanine = D-alanine. The protein operates within amino-acid biosynthesis; D-alanine biosynthesis; D-alanine from L-alanine: step 1/1. Functionally, catalyzes the interconversion of L-alanine and D-alanine. May also act on other amino acids. The sequence is that of Alanine racemase (alr) from Albidiferax ferrireducens (strain ATCC BAA-621 / DSM 15236 / T118) (Rhodoferax ferrireducens).